A 2430-amino-acid chain; its full sequence is DNA-directed RNA polymerase subunit beta'' (2430 aa).

Zn(2+)-binding residues include C336, C455, C462, and C465.

Belongs to the RNA polymerase beta' chain family. RpoC2 subfamily. In plastids the minimal PEP RNA polymerase catalytic core is composed of four subunits: alpha, beta, beta', and beta''. When a (nuclear-encoded) sigma factor is associated with the core the holoenzyme is formed, which can initiate transcription. Requires Zn(2+) as cofactor.

Its subcellular location is the plastid. It is found in the chloroplast. The catalysed reaction is RNA(n) + a ribonucleoside 5'-triphosphate = RNA(n+1) + diphosphate. Its function is as follows. DNA-dependent RNA polymerase catalyzes the transcription of DNA into RNA using the four ribonucleoside triphosphates as substrates. In Stigeoclonium helveticum (Green alga), this protein is DNA-directed RNA polymerase subunit beta''.